The primary structure comprises 180 residues: Small ribosomal subunit protein uS4 (180 aa).

The region spanning 103–165 is the S4 RNA-binding domain; it reads RRLQTIVYRK…KGSPFAKEGH (63 aa).

This sequence belongs to the universal ribosomal protein uS4 family. In terms of assembly, part of the 30S ribosomal subunit. Contacts protein S5. The interaction surface between S4 and S5 is involved in control of translational fidelity.

One of the primary rRNA binding proteins, it binds directly to 16S rRNA where it nucleates assembly of the body of the 30S subunit. In terms of biological role, with S5 and S12 plays an important role in translational accuracy. This Thermococcus kodakarensis (strain ATCC BAA-918 / JCM 12380 / KOD1) (Pyrococcus kodakaraensis (strain KOD1)) protein is Small ribosomal subunit protein uS4.